An 89-amino-acid chain; its full sequence is Small ribosomal subunit protein uS15 (89 aa).

The protein belongs to the universal ribosomal protein uS15 family. Part of the 30S ribosomal subunit. Forms a bridge to the 50S subunit in the 70S ribosome, contacting the 23S rRNA.

In terms of biological role, one of the primary rRNA binding proteins, it binds directly to 16S rRNA where it helps nucleate assembly of the platform of the 30S subunit by binding and bridging several RNA helices of the 16S rRNA. Functionally, forms an intersubunit bridge (bridge B4) with the 23S rRNA of the 50S subunit in the ribosome. In Chlamydia felis (strain Fe/C-56) (Chlamydophila felis), this protein is Small ribosomal subunit protein uS15.